We begin with the raw amino-acid sequence, 221 residues long: 7-cyano-7-deazaguanine synthase (221 aa).

10–20 (FSGGQDSTTCL) lines the ATP pocket. Zn(2+) contacts are provided by cysteine 186, cysteine 195, cysteine 198, and cysteine 201.

The protein belongs to the QueC family. As to quaternary structure, homodimer. Zn(2+) is required as a cofactor.

It carries out the reaction 7-carboxy-7-deazaguanine + NH4(+) + ATP = 7-cyano-7-deazaguanine + ADP + phosphate + H2O + H(+). Its pathway is purine metabolism; 7-cyano-7-deazaguanine biosynthesis. In terms of biological role, catalyzes the ATP-dependent conversion of 7-carboxy-7-deazaguanine (CDG) to 7-cyano-7-deazaguanine (preQ(0)). The sequence is that of 7-cyano-7-deazaguanine synthase from Geobacillus thermodenitrificans (strain NG80-2).